Consider the following 269-residue polypeptide: MRSLADFEFNNAPLCDGMILASEMIRLDFPTQFVYDELERLVSLAQEEISQLLSQDEQLEKLLALFYGEWGFTDSRGVYRLSDALWLDKVLKKRQGSAVSLGAILLWIANRLDLPLVPVIFPTQLILRIESLEGEMWLINPFNGETLDEHTLEVWLKGNISPVAELFNEDLDEADNAEVIRKLLDTLKSSLMEERQMELALRVSEALLQFNPEDPYEIRDRGLIYAQLECEHVALTDLSYFVEQCPEDPISEMIRAQINTIAHKQIVLH.

This sequence belongs to the UPF0162 family.

Required for maximal expression of sirC, not required to invade host cells. The polypeptide is Protein SirB1 (sirB1) (Salmonella typhi).